The following is a 223-amino-acid chain: Glutathione S-transferase A1 (223 aa).

At Met1 the chain carries N-acetylmethionine. Residue Ala2 is modified to N-acetylalanine; in Glutathione S-transferase A1, N-terminally processed. One can recognise a GST N-terminal domain in the interval 3–83 (GKPVLHYFNA…YIATKYDLYG (81 aa)). Residue Lys4 is modified to N6-succinyllysine. Glutathione-binding positions include Tyr9, Lys45, 54-55 (QV), and 67-68 (QT). Residues 85–208 (DMKERALIDM…QPGSQRKPPM (124 aa)) form the GST C-terminal domain.

Belongs to the GST superfamily. Alpha family. As to quaternary structure, homodimer. As to expression, expressed in the liver, skin and kidney.

The enzyme catalyses RX + glutathione = an S-substituted glutathione + a halide anion + H(+). It carries out the reaction prostaglandin A2 + glutathione = prostaglandin A2-S-(R)-glutathione. The catalysed reaction is prostaglandin J2 + glutathione = prostaglandin J2-S-(R)-glutathione. It catalyses the reaction (13S)-hydroperoxy-(9Z,11E)-octadecadienoate + 2 glutathione = (13S)-hydroxy-(9Z,11E)-octadecadienoate + glutathione disulfide + H2O. The enzyme catalyses androst-5-ene-3,17-dione = androst-4-ene-3,17-dione. In terms of biological role, glutathione S-transferase that catalyzes the nucleophilic attack of the sulfur atom of glutathione on the electrophilic groups of a wide range of exogenous and endogenous compounds. Involved in the formation of glutathione conjugates of both prostaglandin A2 (PGA2) and prostaglandin J2 (PGJ2). It also catalyzes the isomerization of D5-androstene-3,17-dione (AD) into D4-androstene-3,17-dione and may therefore play an important role in hormone biosynthesis. Through its glutathione-dependent peroxidase activity toward the fatty acid hydroperoxide (13S)-hydroperoxy-(9Z,11E)-octadecadienoate/13-HPODE it is also involved in the metabolism of oxidized linoleic acid. The sequence is that of Glutathione S-transferase A1 (Gsta1) from Mus musculus (Mouse).